The following is a 90-amino-acid chain: Probable Fe(2+)-trafficking protein (90 aa).

It belongs to the Fe(2+)-trafficking protein family. In terms of assembly, monomer.

In terms of biological role, could be a mediator in iron transactions between iron acquisition and iron-requiring processes, such as synthesis and/or repair of Fe-S clusters in biosynthetic enzymes. This Yersinia pestis bv. Antiqua (strain Antiqua) protein is Probable Fe(2+)-trafficking protein.